The sequence spans 427 residues: Peptidase B (427 aa).

Mn(2+)-binding residues include lysine 195 and aspartate 200. Lysine 207 is an active-site residue. 3 residues coordinate Mn(2+): aspartate 218, aspartate 277, and glutamate 279. The active site involves arginine 281.

It belongs to the peptidase M17 family. In terms of assembly, homohexamer. Mn(2+) serves as cofactor.

The protein localises to the cytoplasm. It carries out the reaction Release of an N-terminal amino acid, Xaa, from a peptide or arylamide. Xaa is preferably Glu or Asp but may be other amino acids, including Leu, Met, His, Cys and Gln.. Probably plays an important role in intracellular peptide degradation. This is Peptidase B from Shigella boydii serotype 18 (strain CDC 3083-94 / BS512).